A 281-amino-acid chain; its full sequence is 2,3,4,5-tetrahydropyridine-2,6-dicarboxylate N-succinyltransferase (281 aa).

2 residues coordinate substrate: R108 and D145.

It belongs to the transferase hexapeptide repeat family. In terms of assembly, homotrimer.

The protein resides in the cytoplasm. The enzyme catalyses (S)-2,3,4,5-tetrahydrodipicolinate + succinyl-CoA + H2O = (S)-2-succinylamino-6-oxoheptanedioate + CoA. Its pathway is amino-acid biosynthesis; L-lysine biosynthesis via DAP pathway; LL-2,6-diaminopimelate from (S)-tetrahydrodipicolinate (succinylase route): step 1/3. The protein is 2,3,4,5-tetrahydropyridine-2,6-dicarboxylate N-succinyltransferase of Rhodopseudomonas palustris (strain ATCC BAA-98 / CGA009).